The sequence spans 501 residues: MSTANNKPTESVSLNAFKQPKSFYLIFSIELWERFGYYGLQGIMAVYLVKQLGMSEADSITLFSSFSALVYGLVAIGGWLGDKVLGTKRVIMLGAIVLAIGYGLVAWSGHDVAIVYMGMATIAVGNGLFKANPSSLLSTCYAKDDPRLDGAFTMYYMSINIGSFFSMLATPWLAAKFGWSVAFALSFVGMLITVVNFLFCRSWVKDYGSKPDFEAVHFGKLLATIAGVIVLIAIATWLLHNQGIARMVLGVIALGIVIIFGKEAFAMQGAARRKMIVAFILMLEAIIFFVLYSQMPTSLNFFAIRNVEHTILGIAVEPEQYQALNPFWIIIGSPILAAIYNKMGDTLPMPTKFAIGMVLCSGAFLVLPLGAKFATDAGIVSVNWLILSYGLQSIGELMISGLGLAMVAQLVPQRLMGFIMGSWFLTTAGANLIGGYVAGMMAVPENVTDPLMSLEVYGRVFLQIGVATAVIAALMLITAPKLNRMTQDDEENAKAAKTATA.

Topologically, residues methionine 1 to arginine 34 are cytoplasmic. Residues phenylalanine 35 to serine 55 traverse the membrane as a helical segment. The Periplasmic portion of the chain corresponds to glutamate 56–serine 59. Residues isoleucine 60–leucine 80 traverse the membrane as a helical segment. Residues glycine 81–arginine 89 are Cytoplasmic-facing. Residues valine 90 to histidine 110 form a helical membrane-spanning segment. A topological domain (periplasmic) is located at residue aspartate 111. The chain crosses the membrane as a helical span at residues valine 112–asparagine 132. The Cytoplasmic segment spans residues proline 133–threonine 153. The helical transmembrane segment at methionine 154–alanine 174 threads the bilayer. At alanine 175–glycine 178 the chain is on the periplasmic side. The helical transmembrane segment at tryptophan 179–phenylalanine 199 threads the bilayer. The Cytoplasmic portion of the chain corresponds to cysteine 200–histidine 217. A helical transmembrane segment spans residues phenylalanine 218 to leucine 238. The Periplasmic portion of the chain corresponds to leucine 239–arginine 246. The helical transmembrane segment at methionine 247–methionine 267 threads the bilayer. Residues glutamine 268–lysine 274 lie on the Cytoplasmic side of the membrane. The helical transmembrane segment at methionine 275 to methionine 295 threads the bilayer. Over proline 296 to glutamine 320 the chain is Periplasmic. A helical membrane pass occupies residues tyrosine 321–asparagine 341. The Cytoplasmic segment spans residues lysine 342–lysine 352. The chain crosses the membrane as a helical span at residues phenylalanine 353–phenylalanine 373. The Periplasmic portion of the chain corresponds to alanine 374–asparagine 383. Residues tryptophan 384–leucine 404 traverse the membrane as a helical segment. The Cytoplasmic portion of the chain corresponds to alanine 405–arginine 414. Residues leucine 415 to glycine 435 traverse the membrane as a helical segment. The Periplasmic portion of the chain corresponds to tyrosine 436–arginine 459. Residues valine 460–proline 480 traverse the membrane as a helical segment. Residues lysine 481 to alanine 501 lie on the Cytoplasmic side of the membrane.

It belongs to the major facilitator superfamily. Proton-dependent oligopeptide transporter (POT/PTR) (TC 2.A.17) family. DtpA subfamily.

It is found in the cell inner membrane. Proton-dependent permease that transports di- and tripeptides. In Citrobacter koseri (strain ATCC BAA-895 / CDC 4225-83 / SGSC4696), this protein is Dipeptide and tripeptide permease A.